The following is a 271-amino-acid chain: uncharacterized protein (271 aa).

The first 22 residues, 1–22, serve as a signal peptide directing secretion; the sequence is MARELLFLACAIVIADSWPAKA.

This is an uncharacterized protein from Sinorhizobium fredii (strain NBRC 101917 / NGR234).